The following is a 255-amino-acid chain: Imidazole glycerol phosphate synthase subunit HisF (255 aa).

Catalysis depends on residues Asp11 and Asp130.

The protein belongs to the HisA/HisF family. As to quaternary structure, heterodimer of HisH and HisF.

Its subcellular location is the cytoplasm. The catalysed reaction is 5-[(5-phospho-1-deoxy-D-ribulos-1-ylimino)methylamino]-1-(5-phospho-beta-D-ribosyl)imidazole-4-carboxamide + L-glutamine = D-erythro-1-(imidazol-4-yl)glycerol 3-phosphate + 5-amino-1-(5-phospho-beta-D-ribosyl)imidazole-4-carboxamide + L-glutamate + H(+). It participates in amino-acid biosynthesis; L-histidine biosynthesis; L-histidine from 5-phospho-alpha-D-ribose 1-diphosphate: step 5/9. In terms of biological role, IGPS catalyzes the conversion of PRFAR and glutamine to IGP, AICAR and glutamate. The HisF subunit catalyzes the cyclization activity that produces IGP and AICAR from PRFAR using the ammonia provided by the HisH subunit. The protein is Imidazole glycerol phosphate synthase subunit HisF of Campylobacter jejuni (strain RM1221).